The chain runs to 607 residues: MAANVFPFRDARAAPDPVLEAGPVAHGPLPVPLVLDNGSFQVRAGWACPGQDPGPEPRLQFRAVCARGRGGARGASGPQVGNALGSLEPLRWMLRSPFDRNVPVNLELQELLLDYSFQHLGVSSQGCVDHPIVLTEAVCNPLYSRQMMSELLFECYGIPKVAYGIDSLFSFYHNKPKNSMCSGLIISSGYQCTHVLPILEGRLDAKNCKRINLGGSQAAGYLQRLLQLKYPGHLAAITLSRMEEILHEHSYIAEDYVEELHKWRCPDYYENNVHKMQLPFSSKLLGSTLTSEEKQERRQQQLRRLQELNARRREEKLQLDQERLDRLLYVQELLEDGQMDQFHKALIELNMDSPEELQSYIQKLSIAVEQAKQKILQAEVNLEVDVVDSKPETPDLEQLEPSLEDVESMNDFDPLFSEETPGVEKPVTTVQPVFNLAAYHQLFVGTERIRAPEIIFQPSLIGEEQAGIAETLQYILDRYPKDIQEMLVQNVFLTGGNTMYPGMKARMEKELLEMRPFRSSFQVQLASNPVLDAWYGARDWALNHLDDNEVWITRKEYEEKGGEYLKEHCASNIYVPIRLPKQASRSSDAQASSKGSAAGGGGAGEQA.

Residue Lys-283 forms a Glycyl lysine isopeptide (Lys-Gly) (interchain with G-Cter in SUMO2) linkage. 2 coiled-coil regions span residues 288-327 (TLTSEEKQERRQQQLRRLQELNARRREEKLQLDQERLDRL) and 355-384 (EELQSYIQKLSIAVEQAKQKILQAEVNLEV). Residues 584–596 (SRSSDAQASSKGS) are compositionally biased toward low complexity. The tract at residues 584-607 (SRSSDAQASSKGSAAGGGGAGEQA) is disordered. The span at 597 to 607 (AAGGGGAGEQA) shows a compositional bias: gly residues.

The protein belongs to the actin family. ARP5 subfamily. In terms of assembly, component of the chromatin remodeling INO80 complex; specifically part of a complex module associated with the helicase ATP-binding and the helicase C-terminal domain of INO80. Interacts with DDB1. Interacts with ACTR8; the interaction is observed in asynchronous (interphase) cells but not in metaphase-arrested cells indicative for a possible dissociation of the INO80 complex in mitotic cells.

It localises to the nucleus. The protein localises to the cytoplasm. Its function is as follows. Proposed core component of the chromatin remodeling INO80 complex which is involved in transcriptional regulation, DNA replication and probably DNA repair. Involved in DNA double-strand break repair and UV-damage excision repair. In Homo sapiens (Human), this protein is Actin-related protein 5 (ACTR5).